The primary structure comprises 370 residues: Mitogen-activated protein kinase 3 (370 aa).

The Protein kinase domain occupies 32 to 319 (YVPIKPIGRG…VTEALEHPYM (288 aa)). Residues 38 to 46 (IGRGAYGIV) and Lys61 contribute to the ATP site. Asp158 acts as the Proton acceptor in catalysis. Position 191 is a phosphothreonine (Thr191). The short motif at 191–193 (TEY) is the TXY element. Tyr193 bears the Phosphotyrosine mark.

This sequence belongs to the protein kinase superfamily. CMGC Ser/Thr protein kinase family. MAP kinase subfamily. In terms of processing, dually phosphorylated on Thr-191 and Tyr-193, which activates the enzyme.

The catalysed reaction is L-seryl-[protein] + ATP = O-phospho-L-seryl-[protein] + ADP + H(+). It catalyses the reaction L-threonyl-[protein] + ATP = O-phospho-L-threonyl-[protein] + ADP + H(+). Activated by threonine and tyrosine phosphorylation. The sequence is that of Mitogen-activated protein kinase 3 (MPK3) from Oryza sativa subsp. japonica (Rice).